A 460-amino-acid polypeptide reads, in one-letter code: Tyrosine phenol-lyase (460 aa).

K260 bears the N6-(pyridoxal phosphate)lysine mark.

It belongs to the beta-eliminating lyase family. In terms of assembly, homotetramer. Requires pyridoxal 5'-phosphate as cofactor.

The catalysed reaction is L-tyrosine + H2O = phenol + pyruvate + NH4(+). The chain is Tyrosine phenol-lyase from Fusobacterium nucleatum subsp. nucleatum (strain ATCC 25586 / DSM 15643 / BCRC 10681 / CIP 101130 / JCM 8532 / KCTC 2640 / LMG 13131 / VPI 4355).